The sequence spans 114 residues: Large ribosomal subunit protein bL20c (114 aa).

The protein belongs to the bacterial ribosomal protein bL20 family.

It localises to the plastid. In terms of biological role, binds directly to 23S ribosomal RNA and is necessary for the in vitro assembly process of the 50S ribosomal subunit. It is not involved in the protein synthesizing functions of that subunit. This is Large ribosomal subunit protein bL20c from Prototheca wickerhamii.